Consider the following 346-residue polypeptide: N-acetyl-gamma-glutamyl-phosphate reductase (346 aa).

Cys150 is an active-site residue.

This sequence belongs to the NAGSA dehydrogenase family. Type 1 subfamily.

The protein resides in the cytoplasm. It carries out the reaction N-acetyl-L-glutamate 5-semialdehyde + phosphate + NADP(+) = N-acetyl-L-glutamyl 5-phosphate + NADPH + H(+). It functions in the pathway amino-acid biosynthesis; L-arginine biosynthesis; N(2)-acetyl-L-ornithine from L-glutamate: step 3/4. In terms of biological role, catalyzes the NADPH-dependent reduction of N-acetyl-5-glutamyl phosphate to yield N-acetyl-L-glutamate 5-semialdehyde. The polypeptide is N-acetyl-gamma-glutamyl-phosphate reductase (Alkaliphilus metalliredigens (strain QYMF)).